The sequence spans 461 residues: Cysteine--tRNA ligase (461 aa).

Zn(2+) is bound at residue Cys-28. The 'HIGH' region signature appears at 30-40; the sequence is ITVYDLCHIGH. Residues Cys-209, His-234, and Glu-238 each contribute to the Zn(2+) site. Positions 266 to 270 match the 'KMSKS' region motif; it reads KMSKS. Lys-269 contacts ATP.

This sequence belongs to the class-I aminoacyl-tRNA synthetase family. In terms of assembly, monomer. Zn(2+) serves as cofactor.

The protein resides in the cytoplasm. The enzyme catalyses tRNA(Cys) + L-cysteine + ATP = L-cysteinyl-tRNA(Cys) + AMP + diphosphate. This is Cysteine--tRNA ligase from Salmonella dublin (strain CT_02021853).